The chain runs to 759 residues: Arylphorin subunit C223 (759 aa).

The signal sequence occupies residues 1 to 15 (MKIAIVLLAIVGLAA).

It belongs to the hemocyanin family. In terms of assembly, heterohexamer. Fat body.

The protein resides in the secreted. The protein localises to the extracellular space. Arylphorin is a larval storage protein (LSP) which may serve as a storage protein used primarily as a source of aromatic amino acids for protein synthesis during metamorphosis. It is a constituent of the sclerotizing system of the cuticle, and serves as a carrier for ecdysteroid hormone. The sequence is that of Arylphorin subunit C223 from Calliphora vicina (Blue blowfly).